Consider the following 266-residue polypeptide: ATP synthase subunit a (266 aa).

5 helical membrane passes run 28-48, 88-108, 141-161, 206-226, and 237-257; these read SINVDSMFFSIALGILFLVIF, LIAPLALTIFVWVFLMNLMDL, DVNITLSMALGVFILVLFYSI, LFGNMYAGELIFILIAGLLPW, and AIFHILIITLQAFIFMVLTVV.

The protein belongs to the ATPase A chain family. As to quaternary structure, F-type ATPases have 2 components, CF(1) - the catalytic core - and CF(0) - the membrane proton channel. CF(1) has five subunits: alpha(3), beta(3), gamma(1), delta(1), epsilon(1). CF(0) has three main subunits: a(1), b(2) and c(9-12). The alpha and beta chains form an alternating ring which encloses part of the gamma chain. CF(1) is attached to CF(0) by a central stalk formed by the gamma and epsilon chains, while a peripheral stalk is formed by the delta and b chains.

The protein localises to the cell inner membrane. Its function is as follows. Key component of the proton channel; it plays a direct role in the translocation of protons across the membrane. This chain is ATP synthase subunit a, found in Pectobacterium carotovorum subsp. carotovorum (strain PC1).